Consider the following 625-residue polypeptide: FMRFamide-activated amiloride-sensitive sodium channel (625 aa).

Over 1–67 the chain is Cytoplasmic; that stretch reads MKYTSAATKP…IVTSRDTKRK (67 aa). Residues 68 to 89 traverse the membrane as a helical segment; that stretch reads VIWALLVIAGFTAATLQLSLLV. The Extracellular segment spans residues 90–536; it reads RKYLQFQVVE…LADLFADIGG (447 aa). 7 N-linked (GlcNAc...) asparagine glycosylation sites follow: Asn134, Asn196, Asn303, Asn349, Asn365, Asn372, and Asn473. Residues 537-557 traverse the membrane as a helical segment; the sequence is TLGLWMGISVLTIMELIELVI. Residues 558–625 lie on the Cytoplasmic side of the membrane; the sequence is RLTGLVFNSE…DFRRGVESPV (68 aa). The tract at residues 570-591 is disordered; the sequence is LPRGPTTVNNNNGSNNHSQSTS. Positions 575–591 are enriched in low complexity; sequence TTVNNNNGSNNHSQSTS.

The protein belongs to the amiloride-sensitive sodium channel (TC 1.A.6) family. As to expression, muscle and nervous tissue.

Its subcellular location is the membrane. In terms of biological role, FMRFamide-gated ionotropic receptor. This is FMRFamide-activated amiloride-sensitive sodium channel from Cornu aspersum (Brown garden snail).